We begin with the raw amino-acid sequence, 405 residues long: Polyketide biosynthesis cytochrome P450 PksS (405 aa).

A helical membrane pass occupies residues 231–251; the sequence is LYSMLFLLVVAGLETTVNLLG. A heme-binding site is contributed by Cys352.

The protein belongs to the cytochrome P450 family.

Its subcellular location is the cell membrane. The protein operates within antibiotic biosynthesis; bacillaene biosynthesis. Functionally, involved in the metabolism of the antibiotic polyketide bacillaene which is involved in secondary metabolism. The substrate is dihydrobacillaene. The protein is Polyketide biosynthesis cytochrome P450 PksS (pksS) of Bacillus subtilis (strain 168).